The sequence spans 568 residues: MEETYSPFTGRQGQYNQGYNGGGRRDSRGGMGERIKPVDWGNVSLVPGNWKVLDGKAIKKAGEIKTSTPEAGQLSEEEATKWREEHVITIFGDDCPPPMSSFDHLCGIVPPYLLKKLTAQNFTAPTPVQAQSWPVLLSGRDLVGVAKTGSGKTLGFMVPALAHIAVQEPLRSGDGPMVVVLAPTRELAQQIEEETKKVIPGDVYCGCVYGGAPKGPQLGLLRRGVHILVATPGRLIDFLDIKRINLHRVTYLVLDEADRMLDMGFEPQVRKICGQIRPDRQTVMFSATWPREIQRLAAEFQKQWIRISVGSTELQANKDVTQRFILTQEFAKQDELRKLMQEHREERVLVFCKMKRTADELERQLRRWGYDAMAIHGDKEQRQREFILARFRKDPRLCLVATDVAARGLDIKQLETVINYDFPMQIDDYVHRIGRTGRAGGEGRCVYLITKKEAQITPSVLKELIGILERAQQEIPDWMIEWNAQQPRYQVKRNRGMNGFGRHQSAPFLRNGHRPSFSANGNYSAHGNGTFGLGKHNDDAVPFSSSAIQYKRFDSDDEAEPSRKKYAR.

The interval 1–34 (MEETYSPFTGRQGQYNQGYNGGGRRDSRGGMGER) is disordered. Over residues 23 to 34 (GRRDSRGGMGER) the composition is skewed to basic and acidic residues. A Q motif motif is present at residues 102-130 (FDHLCGIVPPYLLKKLTAQNFTAPTPVQA). Positions 133-307 (WPVLLSGRDL…AEFQKQWIRI (175 aa)) constitute a Helicase ATP-binding domain. Residue 146–153 (AKTGSGKT) coordinates ATP. A DEAD box motif is present at residues 255 to 258 (DEAD). The Helicase C-terminal domain maps to 335–483 (ELRKLMQEHR…EIPDWMIEWN (149 aa)).

It belongs to the DEAD box helicase family. DDX5/DBP2 subfamily.

It is found in the nucleus. The enzyme catalyses ATP + H2O = ADP + phosphate + H(+). The chain is Putative DEAD-box RNA helicase HEL64 (HEL64) from Trypanosoma brucei brucei.